The chain runs to 59 residues: uncharacterized protein (59 aa).

Basic and acidic residues-rich tracts occupy residues 1-23 (MAEH…DAGR) and 36-45 (DPQRASEAGK). Residues 1–59 (MAEHRGGSGNFAEDREKASDAGRKGGQHSGGNFKNDPQRASEAGKKGGQQSGGNKSGKS) are disordered. Residues 46 to 59 (KGGQQSGGNKSGKS) show a composition bias toward gly residues.

Belongs to the con-10 family.

This is an uncharacterized protein from Escherichia coli (strain K12).